The following is a 153-amino-acid chain: ATP synthase subunit b' (153 aa).

A helical membrane pass occupies residues 20–40 (TLPLMAVQVVLLTFILNALFF).

Belongs to the ATPase B chain family. F-type ATPases have 2 components, F(1) - the catalytic core - and F(0) - the membrane proton channel. F(1) has five subunits: alpha(3), beta(3), gamma(1), delta(1), epsilon(1). F(0) has four main subunits: a(1), b(1), b'(1) and c(10-14). The alpha and beta chains form an alternating ring which encloses part of the gamma chain. F(1) is attached to F(0) by a central stalk formed by the gamma and epsilon chains, while a peripheral stalk is formed by the delta, b and b' chains.

Its subcellular location is the cellular thylakoid membrane. Its function is as follows. F(1)F(0) ATP synthase produces ATP from ADP in the presence of a proton or sodium gradient. F-type ATPases consist of two structural domains, F(1) containing the extramembraneous catalytic core and F(0) containing the membrane proton channel, linked together by a central stalk and a peripheral stalk. During catalysis, ATP synthesis in the catalytic domain of F(1) is coupled via a rotary mechanism of the central stalk subunits to proton translocation. Component of the F(0) channel, it forms part of the peripheral stalk, linking F(1) to F(0). The b'-subunit is a diverged and duplicated form of b found in plants and photosynthetic bacteria. The sequence is that of ATP synthase subunit b' from Prochlorococcus marinus (strain MIT 9211).